A 242-amino-acid chain; its full sequence is Sugar fermentation stimulation protein homolog (242 aa).

This sequence belongs to the SfsA family.

This chain is Sugar fermentation stimulation protein homolog, found in Rippkaea orientalis (strain PCC 8801 / RF-1) (Cyanothece sp. (strain PCC 8801)).